The following is a 457-amino-acid chain: ATP synthase subunit beta (457 aa).

An ATP-binding site is contributed by 150-157; it reads GGAGVGKT.

It belongs to the ATPase alpha/beta chains family. F-type ATPases have 2 components, CF(1) - the catalytic core - and CF(0) - the membrane proton channel. CF(1) has five subunits: alpha(3), beta(3), gamma(1), delta(1), epsilon(1). CF(0) has three main subunits: a(1), b(2) and c(9-12). The alpha and beta chains form an alternating ring which encloses part of the gamma chain. CF(1) is attached to CF(0) by a central stalk formed by the gamma and epsilon chains, while a peripheral stalk is formed by the delta and b chains.

The protein localises to the cell membrane. It carries out the reaction ATP + H2O + 4 H(+)(in) = ADP + phosphate + 5 H(+)(out). Functionally, produces ATP from ADP in the presence of a proton gradient across the membrane. The catalytic sites are hosted primarily by the beta subunits. The polypeptide is ATP synthase subunit beta (Baumannia cicadellinicola subsp. Homalodisca coagulata).